Here is a 505-residue protein sequence, read N- to C-terminus: ATP-dependent RNA helicase HAS1 (505 aa).

The disordered stretch occupies residues 1-37 (MATPSNKRSRDSESTEEPVVDEKSTSKQNNAAPEGEQ). The residue at position 12 (Ser-12) is a Phosphoserine. The span at 26-37 (SKQNNAAPEGEQ) shows a compositional bias: polar residues. The Q motif motif lies at 42–70 (EKFEELKLSQPTLKAIEKMGFTTMTSVQA). The Helicase ATP-binding domain occupies 73–249 (IPPLLAGRDV…RISLRPGPLF (177 aa)). Residue 86 to 93 (AKTGSGKT) participates in ATP binding. The short motif at 196–199 (DEAD) is the DEAD box element. A Helicase C-terminal domain is found at 263 to 433 (GLEQGYVVCD…NVQSQLEKLI (171 aa)). A Bipartite nuclear localization signal motif is present at residues 275–291 (KRFLLLFSFLKRNQKKK).

It belongs to the DEAD box helicase family. DDX18/HAS1 subfamily. As to quaternary structure, interacts with RRP1. Associates in the nucleolus with the 60S and pre-60S ribosomal subunits. It has also been isolated with the nuclear pore complex. Post-translationally, phosphorylated by CDK1.

It localises to the nucleus. Its subcellular location is the nucleolus. It catalyses the reaction ATP + H2O = ADP + phosphate + H(+). ATP-dependent RNA helicase involved in 40S ribosomal subunit biogenesis. Required for the processing and cleavage of 35S pre-rRNA at sites A0, A1, and A2, leading to mature 18S rRNA. The chain is ATP-dependent RNA helicase HAS1 (HAS1) from Saccharomyces cerevisiae (strain ATCC 204508 / S288c) (Baker's yeast).